The primary structure comprises 562 residues: NAD-dependent malic enzyme (562 aa).

Tyr-101 serves as the catalytic Proton donor. Arg-154 contributes to the NAD(+) binding site. Lys-172 (proton acceptor) is an active-site residue. Residues Glu-243, Asp-244, and Asp-267 each coordinate a divalent metal cation. 2 residues coordinate NAD(+): Asp-267 and Asn-415.

It belongs to the malic enzymes family. Homotetramer. Requires Mg(2+) as cofactor. Mn(2+) is required as a cofactor.

It carries out the reaction (S)-malate + NAD(+) = pyruvate + CO2 + NADH. The catalysed reaction is oxaloacetate + H(+) = pyruvate + CO2. The polypeptide is NAD-dependent malic enzyme (Shewanella frigidimarina (strain NCIMB 400)).